Reading from the N-terminus, the 1692-residue chain is Cullin-7 (1692 aa).

Positions 348-421 (RTAFASVNTY…HWHMLEILGF (74 aa)) constitute a CPH domain. The 180-residue stretch at 791–970 (PIQIPFFDVF…HTRLFYMVRA (180 aa)) folds into the DOC domain. Over residues 1319–1335 (VAHEDSGKEHKSKKEDA) the composition is skewed to basic and acidic residues. The interval 1319–1374 (VAHEDSGKEHKSKKEDAAGETAAVAMADEEEEEGKKEEGEEEEGEGEEELEEEEER) is disordered. A compositionally biased stretch (acidic residues) spans 1357 to 1374 (GEEEEGEGEEELEEEEER). Residue Lys1570 forms a Glycyl lysine isopeptide (Lys-Gly) (interchain with G-Cter in NEDD8) linkage.

The protein belongs to the cullin family. In terms of assembly, component of the 3M complex, composed of core components CUL7, CCDC8 and OBSL1. Component of the Cul7-RING(FBXW8) complex consisting of CUL7, RBX1, SKP1 and FBXW8. Within the Cul7-RING(FBXW8) complex interacts with FBXW8 and RBX1, but not with SKP1. Interacts with CUL1 (via the C-terminal domain); the interaction seems to be mediated by FBXW8; it is likely specific to FBXW8, but not other F-box proteins. Interacts (via the CPH domain) with p53/TP53; the interaction preferentially involves tetrameric and dimeric p53/TP53; this interaction recruits p53/TP53 for ubiquitination by neddylated CUL1-RBX1. The CUL7-CUL9 heterodimer seems to interact specifically with p53/TP53. Interacts with FBXW8; interaction is mutually exclusive of binding to CUL9 or p53/TP53. Interacts with CUL9; leading to inhibited CUL9 activity. Interacts with OBSL1. Interacts (as part of the 3M complex) with HDAC4 and HDAC5; it is negatively regulated by ANKRA2.

It localises to the cytoplasm. It is found in the cytoskeleton. The protein localises to the microtubule organizing center. The protein resides in the centrosome. Its subcellular location is the perinuclear region. It localises to the golgi apparatus. The protein operates within protein modification; protein ubiquitination. Core component of the 3M and Cul7-RING(FBXW8) complexes, which mediate the ubiquitination and subsequent proteasomal degradation of target proteins. Core component of the 3M complex, a complex required to regulate microtubule dynamics and genome integrity. It is unclear how the 3M complex regulates microtubules, it could act by controlling the level of a microtubule stabilizer. The Cul7-RING(FBXW8) complex alone lacks ubiquitination activity and does not promote polyubiquitination and proteasomal degradation of p53/TP53. However it mediates recruitment of p53/TP53 for ubiquitination by neddylated CUL1-RBX1. Interaction with CUL9 is required to inhibit CUL9 activity and ubiquitination of BIRC5. The Cul7-RING(FBXW8) complex also mediates ubiquitination and consequent degradation of target proteins such as GORASP1, IRS1 and MAP4K1/HPK1. Ubiquitination of GORASP1 regulates Golgi morphogenesis and dendrite patterning in brain. Mediates ubiquitination and degradation of IRS1 in a mTOR-dependent manner: the Cul7-RING(FBXW8) complex recognizes and binds IRS1 previously phosphorylated by S6 kinase (RPS6KB1 or RPS6KB2). The Cul7-RING(FBXW8) complex also mediates ubiquitination of MAP4K1/HPK1: recognizes and binds autophosphorylated MAP4K1/HPK1, leading to its degradation, thereby affecting cell proliferation and differentiation. Acts as a regulator in trophoblast cell epithelial-mesenchymal transition and placental development. While the Cul7-RING(FBXW8) and the 3M complexes are associated and involved in common processes, CUL7 and the Cul7-RING(FBXW8) complex may have additional functions. Probably plays a role in the degradation of proteins involved in endothelial proliferation and/or differentiation. This is Cullin-7 (Cul7) from Rattus norvegicus (Rat).